The primary structure comprises 97 residues: Large ribosomal subunit protein uL23 (97 aa).

The protein belongs to the universal ribosomal protein uL23 family. In terms of assembly, part of the 50S ribosomal subunit. Contacts protein L29, and trigger factor when it is bound to the ribosome.

In terms of biological role, one of the early assembly proteins it binds 23S rRNA. One of the proteins that surrounds the polypeptide exit tunnel on the outside of the ribosome. Forms the main docking site for trigger factor binding to the ribosome. This chain is Large ribosomal subunit protein uL23, found in Methylococcus capsulatus (strain ATCC 33009 / NCIMB 11132 / Bath).